Reading from the N-terminus, the 208-residue chain is Small ribosomal subunit protein uS4 (208 aa).

The 61-residue stretch at 95 to 155 (TRLDALVLRA…AKSQTMVPFQ (61 aa)) folds into the S4 RNA-binding domain.

It belongs to the universal ribosomal protein uS4 family. Part of the 30S ribosomal subunit. Contacts protein S5. The interaction surface between S4 and S5 is involved in control of translational fidelity.

Functionally, one of the primary rRNA binding proteins, it binds directly to 16S rRNA where it nucleates assembly of the body of the 30S subunit. Its function is as follows. With S5 and S12 plays an important role in translational accuracy. The chain is Small ribosomal subunit protein uS4 from Bifidobacterium adolescentis (strain ATCC 15703 / DSM 20083 / NCTC 11814 / E194a).